A 688-amino-acid polypeptide reads, in one-letter code: Zinc finger CCCH domain-containing protein 22 (688 aa).

The interval 62–123 (ALLPPPPPPS…QPFSRSNGSV (62 aa)) is disordered. Low complexity predominate over residues 101 to 117 (PLSASSPSSWAQAQPFS). The segment at 233-260 (GFGWKPCLYYARGFCKNGSSCRFVHGDD) adopts a C3H1-type zinc-finger fold. The 77-residue stretch at 366–442 (RQIYLTFPAD…RVLVKPYKEK (77 aa)) folds into the RRM domain. Residues 487–522 (TNEMMLRRKLEEQQQAAELQQAIELHSRRLMDLQLL) adopt a coiled-coil conformation. Residues 552–624 (LATTMVESPP…PTKSSVSAHQ (73 aa)) form a disordered region. Positions 574–589 (TEERKMVNGGGDKEES) are enriched in basic and acidic residues. Positions 613 to 624 (ASPTKSSVSAHQ) are enriched in polar residues.

This Oryza sativa subsp. japonica (Rice) protein is Zinc finger CCCH domain-containing protein 22.